A 464-amino-acid polypeptide reads, in one-letter code: Protein FAM90A7 (464 aa).

Disordered regions lie at residues 1-42, 69-387, and 410-437; these read MMAR…DPRL, VPAT…AGHD, and AAPSFHSPEKPGAFLAQSPHVSEKSEAP. Composition is skewed to basic and acidic residues over residues 74–89 and 97–111; these read GKKEGKENLKPWKPRA and NKDKGEKEERPRQQD. The segment covering 180 to 197 has biased composition (low complexity); that stretch reads LASLSPLRKASLSSSSSL.

The protein belongs to the FAM90 family.

The chain is Protein FAM90A7 from Homo sapiens (Human).